A 497-amino-acid chain; its full sequence is Aspartyl/glutamyl-tRNA(Asn/Gln) amidotransferase subunit B (497 aa).

Belongs to the GatB/GatE family. GatB subfamily. As to quaternary structure, heterotrimer of A, B and C subunits.

It carries out the reaction L-glutamyl-tRNA(Gln) + L-glutamine + ATP + H2O = L-glutaminyl-tRNA(Gln) + L-glutamate + ADP + phosphate + H(+). The enzyme catalyses L-aspartyl-tRNA(Asn) + L-glutamine + ATP + H2O = L-asparaginyl-tRNA(Asn) + L-glutamate + ADP + phosphate + 2 H(+). Allows the formation of correctly charged Asn-tRNA(Asn) or Gln-tRNA(Gln) through the transamidation of misacylated Asp-tRNA(Asn) or Glu-tRNA(Gln) in organisms which lack either or both of asparaginyl-tRNA or glutaminyl-tRNA synthetases. The reaction takes place in the presence of glutamine and ATP through an activated phospho-Asp-tRNA(Asn) or phospho-Glu-tRNA(Gln). In Rhodopirellula baltica (strain DSM 10527 / NCIMB 13988 / SH1), this protein is Aspartyl/glutamyl-tRNA(Asn/Gln) amidotransferase subunit B.